The following is a 353-amino-acid chain: Mitogen-activated protein kinase FUS3 (353 aa).

The 297-residue stretch at 13 to 309 folds into the Protein kinase domain; that stretch reads FQLKSLLGEG…AKEALEHPYL (297 aa). Residues 19 to 27 and Lys-42 each bind ATP; that span reads LGEGAYGVV. The Proton acceptor role is filled by Asp-137. Thr-180 bears the Phosphothreonine mark. The short motif at 180–182 is the TXY element; the sequence is TEY. Residue Tyr-182 is modified to Phosphotyrosine. A Glycyl lysine isopeptide (Lys-Gly) (interchain with G-Cter in ubiquitin) cross-link involves residue Lys-345.

This sequence belongs to the protein kinase superfamily. CMGC Ser/Thr protein kinase family. MAP kinase subfamily. As to quaternary structure, in the nucleus, FUS3 forms a complex with DIG1, DIG2 and STE12. The interaction of FUS3 with STE12 depends on the presence of both DIG1 and DIG2. STE12 is lost from FUS3/DIG1/DIG2 complex after pheromone treatment. During its activation and phosphorylation, FUS3 forms a membrane-associated complex with the scaffold protein STE5, the MAPKK STE7, the MAPKKK STE11, and the G-protein beta subunit GBB/STE4; interacting directly with STE7 and STE5. It depends on Mg(2+) as a cofactor. Dually phosphorylated on Thr-180 and Tyr-182 by STE7 in response to pheromone induction, which activates the enzyme. Activated FUS3 initiates a feedback signal, down-regulating phosphorylation of both, FUS3 and KSS1.

Its subcellular location is the nucleus. It localises to the cytoplasm. The protein resides in the periplasm. It carries out the reaction L-seryl-[protein] + ATP = O-phospho-L-seryl-[protein] + ADP + H(+). The enzyme catalyses L-threonyl-[protein] + ATP = O-phospho-L-threonyl-[protein] + ADP + H(+). Activated by tyrosine and threonine phosphorylation after pheromone treatment. In terms of biological role, together with closely related KSS1, FUS3 is the final kinase in the signal transduction cascade regulating activation/repression of the mating and filamentation pathways, induced by pheromone and nitrogen/carbon limitation, respectively. Phosphorylated FUS3 activates the mating but suppresses the filamentation pathway, whereas activated KSS1 activates both pathways. Pheromone-activated FUS3 functions by inhibiting the binding of the transcriptional activator STE12 to filamentation specific genes while inducing its binding to and activity at mating specific genes. Non-activated FUS3 has a repressive effect on STE12 transcriptional activity. KSS1 can partially compensate for the lack of FUS3 but mating efficiency is reduced and the filamentation program is partially activated upon pheromone signaling. FUS3 phosphorylates STE7, STE5, FAR1, DIG1, DIG2 and STE12. The chain is Mitogen-activated protein kinase FUS3 (FUS3) from Saccharomyces cerevisiae (strain ATCC 204508 / S288c) (Baker's yeast).